Reading from the N-terminus, the 120-residue chain is Ribonuclease P protein component (120 aa).

The protein belongs to the RnpA family. Consists of a catalytic RNA component (M1 or rnpB) and a protein subunit.

The catalysed reaction is Endonucleolytic cleavage of RNA, removing 5'-extranucleotides from tRNA precursor.. In terms of biological role, RNaseP catalyzes the removal of the 5'-leader sequence from pre-tRNA to produce the mature 5'-terminus. It can also cleave other RNA substrates such as 4.5S RNA. The protein component plays an auxiliary but essential role in vivo by binding to the 5'-leader sequence and broadening the substrate specificity of the ribozyme. This chain is Ribonuclease P protein component, found in Chlamydia trachomatis serovar L2 (strain ATCC VR-902B / DSM 19102 / 434/Bu).